Here is a 315-residue protein sequence, read N- to C-terminus: Acetyl-coenzyme A carboxylase carboxyl transferase subunit alpha (315 aa).

A CoA carboxyltransferase C-terminal domain is found at 40 to 293 (LQDKSKTLTE…REELSSQLAM (254 aa)).

The protein belongs to the AccA family. As to quaternary structure, acetyl-CoA carboxylase is a heterohexamer composed of biotin carboxyl carrier protein (AccB), biotin carboxylase (AccC) and two subunits each of ACCase subunit alpha (AccA) and ACCase subunit beta (AccD).

The protein localises to the cytoplasm. The catalysed reaction is N(6)-carboxybiotinyl-L-lysyl-[protein] + acetyl-CoA = N(6)-biotinyl-L-lysyl-[protein] + malonyl-CoA. It participates in lipid metabolism; malonyl-CoA biosynthesis; malonyl-CoA from acetyl-CoA: step 1/1. In terms of biological role, component of the acetyl coenzyme A carboxylase (ACC) complex. First, biotin carboxylase catalyzes the carboxylation of biotin on its carrier protein (BCCP) and then the CO(2) group is transferred by the carboxyltransferase to acetyl-CoA to form malonyl-CoA. The sequence is that of Acetyl-coenzyme A carboxylase carboxyl transferase subunit alpha from Pseudomonas syringae pv. syringae (strain B728a).